Reading from the N-terminus, the 420-residue chain is UDP-N-acetylglucosamine 1-carboxyvinyltransferase (420 aa).

Residue 22–23 (KN) participates in phosphoenolpyruvate binding. Arg-94 is a UDP-N-acetyl-alpha-D-glucosamine binding site. The active-site Proton donor is the Cys-118. Cys-118 is modified (2-(S-cysteinyl)pyruvic acid O-phosphothioketal). The UDP-N-acetyl-alpha-D-glucosamine site is built by Asp-307 and Ile-329.

The protein belongs to the EPSP synthase family. MurA subfamily.

The protein localises to the cytoplasm. It catalyses the reaction phosphoenolpyruvate + UDP-N-acetyl-alpha-D-glucosamine = UDP-N-acetyl-3-O-(1-carboxyvinyl)-alpha-D-glucosamine + phosphate. It functions in the pathway cell wall biogenesis; peptidoglycan biosynthesis. In terms of biological role, cell wall formation. Adds enolpyruvyl to UDP-N-acetylglucosamine. The chain is UDP-N-acetylglucosamine 1-carboxyvinyltransferase from Gluconacetobacter diazotrophicus (strain ATCC 49037 / DSM 5601 / CCUG 37298 / CIP 103539 / LMG 7603 / PAl5).